Reading from the N-terminus, the 503-residue chain is Maturase K (503 aa).

This sequence belongs to the intron maturase 2 family. MatK subfamily.

The protein resides in the plastid. The protein localises to the chloroplast. Usually encoded in the trnK tRNA gene intron. Probably assists in splicing its own and other chloroplast group II introns. This is Maturase K from Rosa gigantea (Giant tea rose).